The following is a 233-amino-acid chain: DnaA regulatory inactivator Hda (233 aa).

The protein belongs to the DnaA family. HdA subfamily. As to quaternary structure, the active form seems to be an ADP-bound monomer. Forms the RIDA complex (regulatory inactivation of DnaA) of ATP-DnaA, ADP-Hda and the DNA-loaded beta sliding clamp (dnaN).

Functionally, mediates the interaction of DNA replication initiator protein DnaA with DNA polymerase subunit beta sliding clamp (dnaN). Stimulates hydrolysis of ATP-DnaA to ADP-DnaA, rendering DnaA inactive for reinitiation, a process called regulatory inhibition of DnaA or RIDA. The protein is DnaA regulatory inactivator Hda of Photorhabdus laumondii subsp. laumondii (strain DSM 15139 / CIP 105565 / TT01) (Photorhabdus luminescens subsp. laumondii).